The following is a 159-amino-acid chain: 2-C-methyl-D-erythritol 2,4-cyclodiphosphate synthase (159 aa).

Residues Asp-9 and His-11 each coordinate a divalent metal cation. 4-CDP-2-C-methyl-D-erythritol 2-phosphate-binding positions include 9 to 11 (DVH) and 35 to 36 (HS). His-43 is an a divalent metal cation binding site. 4-CDP-2-C-methyl-D-erythritol 2-phosphate contacts are provided by residues 57–59 (DLG), 62–66 (FPDTD), 133–136 (TTTE), Phe-140, and Arg-143.

It belongs to the IspF family. In terms of assembly, homotrimer. A divalent metal cation is required as a cofactor.

The catalysed reaction is 4-CDP-2-C-methyl-D-erythritol 2-phosphate = 2-C-methyl-D-erythritol 2,4-cyclic diphosphate + CMP. Its pathway is isoprenoid biosynthesis; isopentenyl diphosphate biosynthesis via DXP pathway; isopentenyl diphosphate from 1-deoxy-D-xylulose 5-phosphate: step 4/6. Functionally, involved in the biosynthesis of isopentenyl diphosphate (IPP) and dimethylallyl diphosphate (DMAPP), two major building blocks of isoprenoid compounds. Catalyzes the conversion of 4-diphosphocytidyl-2-C-methyl-D-erythritol 2-phosphate (CDP-ME2P) to 2-C-methyl-D-erythritol 2,4-cyclodiphosphate (ME-CPP) with a corresponding release of cytidine 5-monophosphate (CMP). The chain is 2-C-methyl-D-erythritol 2,4-cyclodiphosphate synthase from Shouchella clausii (strain KSM-K16) (Alkalihalobacillus clausii).